Reading from the N-terminus, the 145-residue chain is uncharacterized protein (145 aa).

A helical membrane pass occupies residues 4–24; that stretch reads IYMLVALLISSLVLFAGCVQN.

Its subcellular location is the membrane. This is an uncharacterized protein from Methanocaldococcus jannaschii (strain ATCC 43067 / DSM 2661 / JAL-1 / JCM 10045 / NBRC 100440) (Methanococcus jannaschii).